The chain runs to 673 residues: DNA ligase (673 aa).

Residues 33 to 37, 82 to 83, and E115 contribute to the NAD(+) site; these read DAEYD and SL. Catalysis depends on K117, which acts as the N6-AMP-lysine intermediate. R138, E175, K292, and K316 together coordinate NAD(+). Zn(2+) contacts are provided by C410, C413, C428, and C434. In terms of domain architecture, BRCT spans 593-673; it reads VGDNPFKEKT…TFLAWSKPYL (81 aa).

It belongs to the NAD-dependent DNA ligase family. LigA subfamily. It depends on Mg(2+) as a cofactor. The cofactor is Mn(2+).

The enzyme catalyses NAD(+) + (deoxyribonucleotide)n-3'-hydroxyl + 5'-phospho-(deoxyribonucleotide)m = (deoxyribonucleotide)n+m + AMP + beta-nicotinamide D-nucleotide.. DNA ligase that catalyzes the formation of phosphodiester linkages between 5'-phosphoryl and 3'-hydroxyl groups in double-stranded DNA using NAD as a coenzyme and as the energy source for the reaction. It is essential for DNA replication and repair of damaged DNA. The sequence is that of DNA ligase from Pasteurella multocida (strain Pm70).